Consider the following 22-residue polypeptide: Large ribosomal subunit protein bL32 (22 aa).

Residues 1-22 (CVPKRKVSPSXRNMRXAHDXLT) are disordered.

It belongs to the bacterial ribosomal protein bL32 family.

The polypeptide is Large ribosomal subunit protein bL32 (rpmF) (Brevundimonas vesicularis (Pseudomonas vesicularis)).